A 470-amino-acid polypeptide reads, in one-letter code: ATP synthase subunit beta (470 aa).

148–155 (GGAGVGKT) lines the ATP pocket.

The protein belongs to the ATPase alpha/beta chains family. In terms of assembly, F-type ATPases have 2 components, CF(1) - the catalytic core - and CF(0) - the membrane proton channel. CF(1) has five subunits: alpha(3), beta(3), gamma(1), delta(1), epsilon(1). CF(0) has three main subunits: a(1), b(2) and c(9-12). The alpha and beta chains form an alternating ring which encloses part of the gamma chain. CF(1) is attached to CF(0) by a central stalk formed by the gamma and epsilon chains, while a peripheral stalk is formed by the delta and b chains.

Its subcellular location is the cell inner membrane. It carries out the reaction ATP + H2O + 4 H(+)(in) = ADP + phosphate + 5 H(+)(out). In terms of biological role, produces ATP from ADP in the presence of a proton gradient across the membrane. The catalytic sites are hosted primarily by the beta subunits. This chain is ATP synthase subunit beta, found in Saccharophagus degradans (strain 2-40 / ATCC 43961 / DSM 17024).